The following is a 117-amino-acid chain: Fluoride-specific ion channel FluC 2 (117 aa).

2 helical membrane-spanning segments follow: residues 1 to 21 and 46 to 66; these read MISIILVMIGGGFGAIARSAI and FLIGLTIGLSISISWFPAFFV. G71 and T74 together coordinate Na(+). The chain crosses the membrane as a helical span at residues 95-115; the sequence is LFLNYSLLQFIIGFIACYIGY.

Belongs to the fluoride channel Fluc/FEX (TC 1.A.43) family.

Its subcellular location is the cell membrane. The catalysed reaction is fluoride(in) = fluoride(out). Its activity is regulated as follows. Na(+) is not transported, but it plays an essential structural role and its presence is essential for fluoride channel function. Its function is as follows. Fluoride-specific ion channel. Important for reducing fluoride concentration in the cell, thus reducing its toxicity. The protein is Fluoride-specific ion channel FluC 2 of Staphylococcus aureus (strain NCTC 8325 / PS 47).